The primary structure comprises 110 residues: DNA-binding protein Mhun_3016 (110 aa).

This sequence belongs to the PDCD5 family.

This Methanospirillum hungatei JF-1 (strain ATCC 27890 / DSM 864 / NBRC 100397 / JF-1) protein is DNA-binding protein Mhun_3016.